The primary structure comprises 279 residues: Putative pyruvate, phosphate dikinase regulatory protein (279 aa).

156–163 (GISRVGKT) is an ADP binding site.

The protein belongs to the pyruvate, phosphate/water dikinase regulatory protein family. PDRP subfamily.

The catalysed reaction is N(tele)-phospho-L-histidyl/L-threonyl-[pyruvate, phosphate dikinase] + ADP = N(tele)-phospho-L-histidyl/O-phospho-L-threonyl-[pyruvate, phosphate dikinase] + AMP + H(+). The enzyme catalyses N(tele)-phospho-L-histidyl/O-phospho-L-threonyl-[pyruvate, phosphate dikinase] + phosphate + H(+) = N(tele)-phospho-L-histidyl/L-threonyl-[pyruvate, phosphate dikinase] + diphosphate. Bifunctional serine/threonine kinase and phosphorylase involved in the regulation of the pyruvate, phosphate dikinase (PPDK) by catalyzing its phosphorylation/dephosphorylation. The protein is Putative pyruvate, phosphate dikinase regulatory protein of Chloroflexus aurantiacus (strain ATCC 29366 / DSM 635 / J-10-fl).